We begin with the raw amino-acid sequence, 365 residues long: Glycolaldehyde reductase (365 aa).

Positions 37, 94, 95, 116, 119, 125, 127, and 131 each coordinate NAD(+). Residues D171, H254, and H271 each coordinate Zn(2+).

It belongs to the iron-containing alcohol dehydrogenase family. Zn(2+) serves as cofactor.

The catalysed reaction is ethylene glycol + NAD(+) = glycolaldehyde + NADH + H(+). With respect to regulation, is subject to substrate inhibition. Functionally, oxidoreductase involved in the non-carboxylating pentose bisphosphate pathway, a nucleoside degradation pathway present in some halophilic archaea. Catalyzes the reduction of glycolaldehyde to ethylene glycol. Cannot catalyze the oxidation of glycerol 1-phosphate nor the reduction of dihydroxyacetone phosphate (DHAP). This is Glycolaldehyde reductase from Halobacterium salinarum (strain ATCC 700922 / JCM 11081 / NRC-1) (Halobacterium halobium).